A 282-amino-acid polypeptide reads, in one-letter code: F-box protein VBF (282 aa).

Residues 1-44 (MMMLPEACIANILAFTSPADAFSSSEVSSVFRLAGDSDFVWEKF) form the F-box domain.

As to quaternary structure, component of SCF(VBF) E3 ubiquitin ligase complex that interacts with VIP1. Interacts directly with SKP1A and VIP1. Forms a complex composed of VIP1, VBF and Agrobacterium virE2.

Component of SCF(VBF) E3 ubiquitin ligase complexes, which mediate the ubiquitination and subsequent proteasomal degradation of target proteins such as VIP1 and Agrobacterium virE2, after their implication in T-DNA translocation to the host nucleus (can functionally replace Agrobacterium VirF). Required during Agrobacterium-induced tumor formation. The sequence is that of F-box protein VBF (VBF) from Arabidopsis thaliana (Mouse-ear cress).